The primary structure comprises 225 residues: Transmembrane protein C16orf54 homolog (225 aa).

The chain crosses the membrane as a helical span at residues 34-54 (IPIMLGLASLTAFFIITTAVL). Positions 107–149 (RAPDPPTPGGTLEGRATAPPAIPTPHPSPSSLVPQTPPEVPAQ) are disordered. Threonine 113 and threonine 117 each carry phosphothreonine. Position 195 is a phosphoserine (serine 195).

The protein localises to the membrane. The polypeptide is Transmembrane protein C16orf54 homolog (Rattus norvegicus (Rat)).